The following is a 237-amino-acid chain: Large ribosomal subunit protein uL1 (237 aa).

This sequence belongs to the universal ribosomal protein uL1 family. In terms of assembly, part of the 50S ribosomal subunit.

In terms of biological role, binds directly to 23S rRNA. The L1 stalk is quite mobile in the ribosome, and is involved in E site tRNA release. Functionally, protein L1 is also a translational repressor protein, it controls the translation of the L11 operon by binding to its mRNA. The sequence is that of Large ribosomal subunit protein uL1 from Synechococcus elongatus (strain ATCC 33912 / PCC 7942 / FACHB-805) (Anacystis nidulans R2).